Reading from the N-terminus, the 127-residue chain is Translation initiation factor 5A (127 aa).

Lys-36 bears the Hypusine mark.

It belongs to the eIF-5A family.

It localises to the cytoplasm. In terms of biological role, functions by promoting the formation of the first peptide bond. In Halobacterium salinarum (strain ATCC 700922 / JCM 11081 / NRC-1) (Halobacterium halobium), this protein is Translation initiation factor 5A (eif5a).